Here is a 315-residue protein sequence, read N- to C-terminus: Ribosomal RNA small subunit methyltransferase H (315 aa).

S-adenosyl-L-methionine contacts are provided by residues 37-39 (GGH), D57, F83, D105, and Q112.

This sequence belongs to the methyltransferase superfamily. RsmH family.

Its subcellular location is the cytoplasm. The enzyme catalyses cytidine(1402) in 16S rRNA + S-adenosyl-L-methionine = N(4)-methylcytidine(1402) in 16S rRNA + S-adenosyl-L-homocysteine + H(+). In terms of biological role, specifically methylates the N4 position of cytidine in position 1402 (C1402) of 16S rRNA. The sequence is that of Ribosomal RNA small subunit methyltransferase H from Pseudomonas fluorescens (strain Pf0-1).